Here is a 419-residue protein sequence, read N- to C-terminus: Histidine--tRNA ligase (419 aa).

Belongs to the class-II aminoacyl-tRNA synthetase family. As to quaternary structure, homodimer.

It localises to the cytoplasm. The catalysed reaction is tRNA(His) + L-histidine + ATP = L-histidyl-tRNA(His) + AMP + diphosphate + H(+). This chain is Histidine--tRNA ligase, found in Caldicellulosiruptor saccharolyticus (strain ATCC 43494 / DSM 8903 / Tp8T 6331).